The chain runs to 199 residues: MMAAKKRVTAAKDKWKLKQWYIIYAPDFFGGVEVGLTPADDPEKVMNRVVEVTLKDITGDFTKGHVKLYFQVYDVKGQNAYTKFKGMKLARSYIRSLVRRRTTRIDGIFNITTKDGYRLRVMAMAIAMRRIQTSQERAIRKIMQEIIYKKAEELNFKDFVLEAVNGKIAAEIAKEGKKIYPLKKAEIRKIKVLGEPEAA.

The protein belongs to the eukaryotic ribosomal protein eS1 family.

This chain is Small ribosomal subunit protein eS1, found in Pyrococcus horikoshii (strain ATCC 700860 / DSM 12428 / JCM 9974 / NBRC 100139 / OT-3).